Here is a 220-residue protein sequence, read N- to C-terminus: PRA1 family protein B4 (220 aa).

The disordered stretch occupies residues 1–27 (MASSAPPVLPISNPQTVPSAAPSSVES). Positions 12 to 27 (SNPQTVPSAAPSSVES) are enriched in polar residues. 5 helical membrane-spanning segments follow: residues 83-103 (YSYF…FSLV), 105-125 (HPFS…LYLF), 146-166 (GCLI…SVLV), 170-190 (MIGV…DLFL), and 196-216 (AATG…PAVI).

This sequence belongs to the PRA1 family. Interacts with PRA1B1, PRA1B2, PRA1B3, PRA1B5, PRA1B6 and PRA1E. Expressed in roots, lateral roots, lateral root caps, stomata and trichomes.

Its subcellular location is the endosome membrane. May be involved in both secretory and endocytic intracellular trafficking in the endosomal/prevacuolar compartments. This Arabidopsis thaliana (Mouse-ear cress) protein is PRA1 family protein B4 (PRA1B4).